The sequence spans 701 residues: Polyribonucleotide nucleotidyltransferase (701 aa).

Mg(2+) contacts are provided by aspartate 487 and aspartate 493. Positions 554-613 (PTMIAMKIDTDKIRDVIGKGGATIRAICEETKASIDIEDDGSIKIFGETKEAADAAKQRI) constitute a KH domain. Positions 623 to 691 (GKIYVGKVER…NRGRIKLSIK (69 aa)) constitute an S1 motif domain.

Belongs to the polyribonucleotide nucleotidyltransferase family. As to quaternary structure, component of the RNA degradosome, which is a multiprotein complex involved in RNA processing and mRNA degradation. The cofactor is Mg(2+).

It is found in the cytoplasm. It catalyses the reaction RNA(n+1) + phosphate = RNA(n) + a ribonucleoside 5'-diphosphate. Functionally, involved in mRNA degradation. Catalyzes the phosphorolysis of single-stranded polyribonucleotides processively in the 3'- to 5'-direction. This chain is Polyribonucleotide nucleotidyltransferase, found in Pseudomonas putida (strain ATCC 47054 / DSM 6125 / CFBP 8728 / NCIMB 11950 / KT2440).